We begin with the raw amino-acid sequence, 206 residues long: Urease accessory protein UreG (206 aa).

Residue 11 to 18 (GPVGAGKT) participates in GTP binding.

It belongs to the SIMIBI class G3E GTPase family. UreG subfamily. In terms of assembly, homodimer. UreD, UreF and UreG form a complex that acts as a GTP-hydrolysis-dependent molecular chaperone, activating the urease apoprotein by helping to assemble the nickel containing metallocenter of UreC. The UreE protein probably delivers the nickel.

Its subcellular location is the cytoplasm. Functionally, facilitates the functional incorporation of the urease nickel metallocenter. This process requires GTP hydrolysis, probably effectuated by UreG. The protein is Urease accessory protein UreG of Ureaplasma parvum serovar 3 (strain ATCC 700970).